Consider the following 464-residue polypeptide: Fumarate hydratase class II (464 aa).

Substrate contacts are provided by residues 98–100, 129–132, 139–141, and Thr-187; these read SGT, HPND, and SSN. The active-site Proton donor/acceptor is the His-188. Ser-318 is an active-site residue. Residues Ser-319 and 324–326 each bind substrate; that span reads KVN.

This sequence belongs to the class-II fumarase/aspartase family. Fumarase subfamily. As to quaternary structure, homotetramer.

It localises to the cytoplasm. It carries out the reaction (S)-malate = fumarate + H2O. It functions in the pathway carbohydrate metabolism; tricarboxylic acid cycle; (S)-malate from fumarate: step 1/1. Functionally, involved in the TCA cycle. Catalyzes the stereospecific interconversion of fumarate to L-malate. This Wigglesworthia glossinidia brevipalpis protein is Fumarate hydratase class II.